A 452-amino-acid chain; its full sequence is Lamina-associated polypeptide 2, isoform beta (452 aa).

Positions 1–409 (MPEFLEDPSV…KSEKTKKGRS (409 aa)) are nucleoplasmic. The region spanning 5-48 (LEDPSVLTKDKLKSELVANNVTLPAGEQRKDVYVQLYLQHLTAR) is the LEM-like domain. Disordered stretches follow at residues 48 to 113 (RNRP…DVTE) and 149 to 264 (REQG…VEPS). The linker stretch occupies residues 49–107 (NRPPLAAGANSKGPPDFSSDEEREPTPVLGSGASVGRGRGAVGRKATKKTDKPRPEDKD). Phosphoserine occurs at positions 66 and 67. Position 74 is a phosphothreonine (threonine 74). At serine 82 the chain carries Phosphoserine. Omega-N-methylarginine is present on residues arginine 85 and arginine 87. Residues 96–105 (KKTDKPRPED) show a composition bias toward basic and acidic residues. In terms of domain architecture, LEM spans 108–152 (DLDVTELSNEELLEQLVRYGVNPGPIVGTTRKLYEKKLLKLREQG). Positions 137 to 242 (TRKLYEKKLL…TSGSSKGGPL (106 aa)) are NAKAP95-binding N. The segment covering 154–177 (ESRSSTPLPTVSSSAENTRQNGSN) has biased composition (polar residues). Phosphoserine occurs at positions 155 and 158. Position 159 is a phosphothreonine (threonine 159). Phosphoserine occurs at positions 165, 167, 176, 179, and 183. The segment covering 178 to 202 (DSDRYSDNDEDSKIELKLEKREPLK) has biased composition (basic and acidic residues). An N6-acetyllysine modification is found at lysine 206. Residues 298–370 (TGNFKHASSI…SCRRPIKGAA (73 aa)) are binds lamins B. The segment at 299 to 373 (GNFKHASSIL…RPIKGAAGRP (75 aa)) is NAKAP95-binding C. Serine 305, serine 306, and serine 361 each carry phosphoserine. Lysine 388 carries the post-translational modification N6-acetyllysine. Residues 410 to 430 (VPMWIKMLLFALVAGFLFLVY) traverse the membrane as a helical; Signal-anchor for type II membrane protein segment. Over 431–452 (QAMETNQGNPFTNFLQDTKISN) the chain is Lumenal.

It belongs to the LEM family. In terms of assembly, interacts with LMNB1, LMNB2, BANF1, AKAP8L, GMCL and chromosomes. Mitosis-specific phosphorylation specifically abolishes its binding to lamin B and chromosomes.

Its subcellular location is the nucleus inner membrane. The protein resides in the chromosome. Functionally, binds directly to lamin B1 and chromosomes in a mitotic phosphorylation-regulated manner. May play an important role in nuclear envelope reassembly at the end of mitosis and/or anchoring of the nuclear lamina and interphase chromosomes to the nuclear envelope. In Rattus norvegicus (Rat), this protein is Lamina-associated polypeptide 2, isoform beta (Tmpo).